A 172-amino-acid chain; its full sequence is Large ribosomal subunit protein uL10 (172 aa).

This sequence belongs to the universal ribosomal protein uL10 family. Part of the ribosomal stalk of the 50S ribosomal subunit. The N-terminus interacts with L11 and the large rRNA to form the base of the stalk. The C-terminus forms an elongated spine to which L12 dimers bind in a sequential fashion forming a multimeric L10(L12)X complex.

Forms part of the ribosomal stalk, playing a central role in the interaction of the ribosome with GTP-bound translation factors. This is Large ribosomal subunit protein uL10 from Francisella tularensis subsp. mediasiatica (strain FSC147).